A 397-amino-acid chain; its full sequence is Odorant receptor 22a (397 aa).

Over Met-1–Lys-49 the chain is Cytoplasmic. Residues Leu-50–Glu-70 traverse the membrane as a helical segment. Residues Tyr-71–Ser-86 lie on the Extracellular side of the membrane. The helical transmembrane segment at Leu-87–Phe-107 threads the bilayer. Over Lys-108–Tyr-136 the chain is Cytoplasmic. A helical transmembrane segment spans residues Val-137 to Met-157. The Extracellular segment spans residues Asn-158–Gln-182. Residues Phe-183 to Cys-203 traverse the membrane as a helical segment. Residues Thr-204–Pro-263 are Cytoplasmic-facing. Residues Val-264 to Leu-280 traverse the membrane as a helical segment. Residues Gly-281–Asn-286 lie on the Extracellular side of the membrane. Residues Leu-287–Phe-304 traverse the membrane as a helical segment. The Cytoplasmic portion of the chain corresponds to Asp-305–Gln-356. Residues Pro-357–Val-377 traverse the membrane as a helical segment. Residues Lys-378–Gln-397 are Extracellular-facing.

Belongs to the insect chemoreceptor superfamily. Heteromeric odorant receptor channel (TC 1.A.69) family. Or2a subfamily. Interacts with Orco, via conserved C-terminal cytoplasmic loops. Complexes exist early in the endomembrane system in olfactory sensory neurons (OSNs), coupling these complexes to the conserved ciliary trafficking pathway. Interacts with snmp1. In terms of tissue distribution, expressed with Orco in 17-20 sensory neurons on the medial-proximal edge of the antenna. Expressed in the ab3A neuron which responds to ethyl butyrate.

It localises to the cell membrane. Functionally, odorant receptor which mediates acceptance or avoidance behavior, depending on its substrates. The odorant receptor repertoire encodes a large collection of odor stimuli that vary widely in identity, intensity, and duration. Involved in the behavioral responses ethyl butyrate and to esters in more general. Complexes with Orco to form odorant-sensing units, providing sensitive and prolonged odorant signaling and calcium permeability. They are necessary and sufficient to promote functional reconstitution of odor-evoked signaling in sensory neurons that normally respond only to carbon dioxide. In Drosophila melanogaster (Fruit fly), this protein is Odorant receptor 22a (Or22a).